We begin with the raw amino-acid sequence, 226 residues long: Urease accessory protein UreE (226 aa).

A disordered region spans residues 192 to 226 (PHGSGLHIHSIHSHGDGHSHDHDHSHGDHDSDHKH). A compositionally biased stretch (basic and acidic residues) spans 204–226 (SHGDGHSHDHDHSHGDHDSDHKH).

The protein belongs to the UreE family.

The protein localises to the cytoplasm. In terms of biological role, involved in urease metallocenter assembly. Binds nickel. Probably functions as a nickel donor during metallocenter assembly. The protein is Urease accessory protein UreE of Yersinia intermedia.